The sequence spans 518 residues: uncharacterized protein (518 aa).

ABC transporter domains are found at residues 4-260 (LSVK…QLEA) and 324-518 (LIFE…TKVL). ATP is bound by residues 36-43 (GANGEGKS) and 357-364 (GANGIGKT).

It belongs to the ABC transporter superfamily.

This is an uncharacterized protein from Bacillus subtilis (strain 168).